We begin with the raw amino-acid sequence, 302 residues long: 4-hydroxy-tetrahydrodipicolinate synthase (302 aa).

Thr-55 serves as a coordination point for pyruvate. The Proton donor/acceptor role is filled by Tyr-144. Catalysis depends on Lys-172, which acts as the Schiff-base intermediate with substrate. Val-214 lines the pyruvate pocket.

Belongs to the DapA family. As to quaternary structure, homotetramer; dimer of dimers.

It is found in the cytoplasm. It carries out the reaction L-aspartate 4-semialdehyde + pyruvate = (2S,4S)-4-hydroxy-2,3,4,5-tetrahydrodipicolinate + H2O + H(+). The protein operates within amino-acid biosynthesis; L-lysine biosynthesis via DAP pathway; (S)-tetrahydrodipicolinate from L-aspartate: step 3/4. Functionally, catalyzes the condensation of (S)-aspartate-beta-semialdehyde [(S)-ASA] and pyruvate to 4-hydroxy-tetrahydrodipicolinate (HTPA). The sequence is that of 4-hydroxy-tetrahydrodipicolinate synthase from Prochlorococcus marinus (strain MIT 9211).